The chain runs to 379 residues: UDP-4-amino-4-deoxy-L-arabinose--oxoglutarate aminotransferase (379 aa).

Residue Lys-182 is modified to N6-(pyridoxal phosphate)lysine.

The protein belongs to the DegT/DnrJ/EryC1 family. ArnB subfamily. Homodimer. The cofactor is pyridoxal 5'-phosphate.

The catalysed reaction is UDP-4-amino-4-deoxy-beta-L-arabinose + 2-oxoglutarate = UDP-beta-L-threo-pentopyranos-4-ulose + L-glutamate. It functions in the pathway nucleotide-sugar biosynthesis; UDP-4-deoxy-4-formamido-beta-L-arabinose biosynthesis; UDP-4-deoxy-4-formamido-beta-L-arabinose from UDP-alpha-D-glucuronate: step 2/3. The protein operates within bacterial outer membrane biogenesis; lipopolysaccharide biosynthesis. In terms of biological role, catalyzes the conversion of UDP-4-keto-arabinose (UDP-Ara4O) to UDP-4-amino-4-deoxy-L-arabinose (UDP-L-Ara4N). The modified arabinose is attached to lipid A and is required for resistance to polymyxin and cationic antimicrobial peptides. The sequence is that of UDP-4-amino-4-deoxy-L-arabinose--oxoglutarate aminotransferase from Salmonella dublin (strain CT_02021853).